A 339-amino-acid chain; its full sequence is MamK-like protein (339 aa).

ATP-binding positions include 18-19, aspartate 74, 162-164, and 216-220; these read YS, AWT, and KEQFA.

It belongs to the FtsA/MreB family. MamK subfamily. In terms of assembly, forms cytoplasmic filament polymers. Forms filaments with MamK.

The protein resides in the cytoplasm. It localises to the cytoskeleton. The catalysed reaction is ATP + H2O = ADP + phosphate + H(+). Protein with ATPase activity which forms pole-to-pole filaments in vivo, probably with MamK. Efficient filament formation requires MamK. Probably promotes turnover of MamK filaments, by providing a monomer pool. In vivo, in the absence of its paralog MamK, forms thin filaments from pole to pole. In vitro forms straight filaments and bundles in the absence of ATP. Filament formation is triggered by KCl and MgCl(2); polymerizes more slowly and makes thinner filaments than MamK. Expression in E.coli yields a filament in the cell's longitudinal axis; the protein nucleates at one pole or the cell septum. In Paramagnetospirillum magneticum (strain ATCC 700264 / AMB-1) (Magnetospirillum magneticum), this protein is MamK-like protein.